Here is a 155-residue protein sequence, read N- to C-terminus: 3-dehydroquinate dehydratase (155 aa).

The active-site Proton acceptor is Tyr-22. Substrate is bound by residues Asn-73, His-79, and Asp-86. The Proton donor role is filled by His-99. Substrate-binding positions include 100–101 (IS) and Arg-110.

This sequence belongs to the type-II 3-dehydroquinase family. As to quaternary structure, homododecamer.

The catalysed reaction is 3-dehydroquinate = 3-dehydroshikimate + H2O. The protein operates within metabolic intermediate biosynthesis; chorismate biosynthesis; chorismate from D-erythrose 4-phosphate and phosphoenolpyruvate: step 3/7. Functionally, catalyzes a trans-dehydration via an enolate intermediate. This Campylobacter hominis (strain ATCC BAA-381 / DSM 21671 / CCUG 45161 / LMG 19568 / NCTC 13146 / CH001A) protein is 3-dehydroquinate dehydratase.